The primary structure comprises 265 residues: Mlc titration factor A (265 aa).

His-111, His-148, His-152, and Glu-211 together coordinate Zn(2+).

This sequence belongs to the MtfA family. Interacts with Mlc. It depends on Zn(2+) as a cofactor.

Its subcellular location is the cytoplasm. Its function is as follows. Involved in the modulation of the activity of the glucose-phosphotransferase system (glucose-PTS). Interacts with the transcriptional repressor Mlc, preventing its interaction with DNA and leading to the modulation of expression of genes regulated by Mlc, including ptsG, which encodes the PTS system glucose-specific EIICB component. Functionally, shows zinc-dependent metallopeptidase activity. The protein is Mlc titration factor A of Salmonella typhi.